A 100-amino-acid polypeptide reads, in one-letter code: uncharacterized protein (100 aa).

A helical membrane pass occupies residues 13 to 32 (IWSSLNIICLMVTFLNVQLS).

It is found in the mitochondrion membrane. This is an uncharacterized protein from Schizosaccharomyces pombe (strain 972 / ATCC 24843) (Fission yeast).